Reading from the N-terminus, the 83-residue chain is MKPVLLTLVVVTIVCLDLGYTRICLKQEPFQPETTTTCPEGEDACYNLFWSDHSEIKIEMGCGCPKTEPYTNLYCCKIDSCNK.

A signal peptide spans 1-21 (MKPVLLTLVVVTIVCLDLGYT). Disulfide bonds link C24/C45, C38/C62, C64/C75, and C76/C81.

It belongs to the three-finger toxin family. Short-chain subfamily. Type I alpha-neurotoxin sub-subfamily. As to expression, expressed by the venom gland.

The protein resides in the secreted. In terms of biological role, binds to muscle nicotinic acetylcholine receptor (nAChR) and inhibit acetylcholine from binding to the receptor, thereby impairing neuromuscular transmission. The polypeptide is Weak toxin DE-1 homolog 1 (Ophiophagus hannah (King cobra)).